A 548-amino-acid chain; its full sequence is Chaperonin GroEL (548 aa).

Residues 30-33, lysine 51, 87-91, glycine 415, and aspartate 495 contribute to the ATP site; these read TLGP and DGTTT.

It belongs to the chaperonin (HSP60) family. In terms of assembly, forms a cylinder of 14 subunits composed of two heptameric rings stacked back-to-back. Interacts with the co-chaperonin GroES.

The protein localises to the cytoplasm. It catalyses the reaction ATP + H2O + a folded polypeptide = ADP + phosphate + an unfolded polypeptide.. Its function is as follows. Together with its co-chaperonin GroES, plays an essential role in assisting protein folding. The GroEL-GroES system forms a nano-cage that allows encapsulation of the non-native substrate proteins and provides a physical environment optimized to promote and accelerate protein folding. This chain is Chaperonin GroEL, found in Colwellia psychrerythraea (strain 34H / ATCC BAA-681) (Vibrio psychroerythus).